Reading from the N-terminus, the 275-residue chain is Large ribosomal subunit protein uL2 (275 aa).

Disordered stretches follow at residues 38-59 (TRGS…GGHK) and 223-275 (VAMN…RKRK). A compositionally biased stretch (basic residues) spans 50–59 (TVRHRGGGHK). The segment covering 229–244 (DHPHGGGEGRTGEARE) has biased composition (basic and acidic residues).

It belongs to the universal ribosomal protein uL2 family. In terms of assembly, part of the 50S ribosomal subunit. Forms a bridge to the 30S subunit in the 70S ribosome.

One of the primary rRNA binding proteins. Required for association of the 30S and 50S subunits to form the 70S ribosome, for tRNA binding and peptide bond formation. It has been suggested to have peptidyltransferase activity; this is somewhat controversial. Makes several contacts with the 16S rRNA in the 70S ribosome. This chain is Large ribosomal subunit protein uL2, found in Bordetella bronchiseptica (strain ATCC BAA-588 / NCTC 13252 / RB50) (Alcaligenes bronchisepticus).